We begin with the raw amino-acid sequence, 503 residues long: MKISIKDIFQKPELFYQKKILLNGWVRNCRYQKKLIFIDLNDGTFLENLQIVCKEIKNIETADINEFQENQKFNNNNKSSNNINLEKLKEILQIGASLQVEGILKATNNLKTPFEISAQNISLLGTSDFSYPLQPKKHSKVFLRQISHLRVRTKLFGAVFRIRNTAFFALHSFFQKKGFFHINTPIITPNDGEGVGELFQITTLNLEVLPQTKNIPNAFKPVNENTSKKGIDYKKDFFGKKVFLTVTGQLEAEAMALGLNKVYTFGPTFRSEKSNTTRHAAEFWMLEPEMAFCDLSQNLKVAQEMLQFVISKCLEQNYQDIEFLDKTEKNGLIEELQNIAEEKEFLTVKYEQALEILQKSNTKFENPLFYGVDLATEHEKYLTEKHFKKPVFIVDWPKEIKAFYMKNNPDQKTVAAMDLLFPRVGELIGGSQREENLSVLIEKMNQMKISQKDLEWYLDLRRFGGCIHSGFGLGFERLLIFLTGLDNIRDVIAFPRTYHNLVF.

Belongs to the class-II aminoacyl-tRNA synthetase family. Homodimer.

The protein localises to the cytoplasm. The enzyme catalyses tRNA(Asn) + L-asparagine + ATP = L-asparaginyl-tRNA(Asn) + AMP + diphosphate + H(+). The polypeptide is Asparagine--tRNA ligase (Aster yellows witches'-broom phytoplasma (strain AYWB)).